A 249-amino-acid polypeptide reads, in one-letter code: Metallo-beta-lactamase type 2 (249 aa).

The signal sequence occupies residues 1-18 (MKTVFILISMLFPVAVMA). 5 residues coordinate Zn(2+): histidine 99, histidine 101, aspartate 103, histidine 162, and cysteine 181. Substrate-binding residues include lysine 184 and asparagine 193. Histidine 223 provides a ligand contact to Zn(2+).

Belongs to the metallo-beta-lactamase superfamily. Class-B beta-lactamase family. In terms of assembly, monomer. The cofactor is Zn(2+).

The protein resides in the periplasm. The enzyme catalyses a beta-lactam + H2O = a substituted beta-amino acid. With respect to regulation, competitively inhibited by 4-morpholineethanesulfonic acid (MES), SB236050 and biphenyl tetrazoles (BPTs). Also inhibited by chelating agents such as EDTA and 1,10-phenanthroline. CcrA is not susceptible to inactivation by the beta-lactamase-blocking agents clavulanic acid or tazobactam. Confers resistance to the different beta-lactams antibiotics (penicillin, cephalosporin and carbapenem) via the hydrolysis of the beta-lactam ring. The polypeptide is Metallo-beta-lactamase type 2 (Bacteroides fragilis).